The primary structure comprises 116 residues: MSDHEVKMVVLSTENLDESIKFYETLGFSLKFRDGAHFAALDGGAVTLALATPVDHPIPGKVVVGIKTADVDAAAKEIEATGGAIIKGPYDDAHERRAVVYDNTGNGLVFYSPLKR.

The region spanning 5–113 is the VOC domain; that stretch reads EVKMVVLSTE…TGNGLVFYSP (109 aa). K76 is covalently cross-linked (Isoglutamyl lysine isopeptide (Lys-Gln) (interchain with Q-Cter in protein Pup)).

This is an uncharacterized protein from Mycolicibacterium smegmatis (strain ATCC 700084 / mc(2)155) (Mycobacterium smegmatis).